The chain runs to 204 residues: HTH-type transcriptional activator BcrR (204 aa).

The Cytoplasmic portion of the chain corresponds to 1–81; sequence MEFNEKLQQL…ETENRSNLKK (81 aa). The 55-residue stretch at 7-61 folds into the HTH cro/C1-type domain; it reads LQQLRTGKNLTQEQLAEQLYVSRTAISKWESGKGYPNMESLKCISKFFSVTIDEL. A DNA-binding region (H-T-H motif) is located at residues 18-37; that stretch reads QEQLAEQLYVSRTAISKWES. Residues 82 to 102 form a helical membrane-spanning segment; that stretch reads IYNYIYGILDMMAVAFIFLPL. At 103-126 the chain is on the extracellular side; it reads YGNSVGGYVYAVNLLSFTATTPFN. A helical membrane pass occupies residues 127 to 147; it reads LAVYWSAFAALIIIGIGKIIS. Residues 148 to 154 lie on the Cytoplasmic side of the membrane; that stretch reads THLDKEK. Residues 155–175 traverse the membrane as a helical segment; it reads WGGIATKCSLTITALAVCFFA. Residues 176–181 are Extracellular-facing; sequence AAREPY. Residues 182-202 form a helical membrane-spanning segment; sequence ITVLVFLLLIGKIFVWIKQMG. The Cytoplasmic portion of the chain corresponds to 203–204; that stretch reads MK.

The protein localises to the cell membrane. Constitutively bound to the bcrABD promoter. Requires bacitracin for activation, probably through a conformational change, such as the oligomerization of inactive dimers to form active tetramers. Its function is as follows. Functions both as a membrane-bound sensor and a transducer of bacitracin availability to activate transcription of the bcrABD operon in the presence of bacitracin. Binds specifically to two inverted repeat sequences on the bcrABD promoter, irrespective of bacitracin concentration. This is HTH-type transcriptional activator BcrR from Enterococcus faecalis (Streptococcus faecalis).